Reading from the N-terminus, the 448-residue chain is Solute carrier family 52, riboflavin transporter, member 3-A (448 aa).

Transmembrane regions (helical) follow at residues 11–31 (AFGLGSWVSINGLWVELPLIV), 40–60 (LPSYLTVIIQFANLGPLLVTL), and 73–93 (LAIYAVLSIGVVACILLAVFW). The N-linked (GlcNAc...) asparagine glycan is linked to Asn94. The next 2 membrane-spanning stretches (helical) occupy residues 107–127 (AFFILTFFLALVDCTSSVTFL) and 138–158 (ITTYFIGEGLSGLVPGLVALA). N-linked (GlcNAc...) asparagine glycans are attached at residues Asn168, Asn171, Asn175, and Asn194. 6 consecutive transmembrane segments (helical) span residues 198–218 (EIFFSFLAVMTTISLGAFLIL), 280–300 (AFIYVMVLWVNSATNGLLPSV), 315–335 (LSAALSAVANPVACIIAMFFP), 339–359 (LVFLGILCLLGSTFGGYNMAM), 376–396 (AIIVLSWVFFTGLLSYVKVMV), and 407–427 (ALVWCGAAVQTGSLLGSIIMF).

It belongs to the riboflavin transporter family.

It localises to the cell membrane. It catalyses the reaction riboflavin(in) = riboflavin(out). Functionally, plasma membrane transporter mediating the uptake by cells of the water soluble vitamin B2/riboflavin that plays a key role in biochemical oxidation-reduction reactions of the carbohydrate, lipid, and amino acid metabolism. The protein is Solute carrier family 52, riboflavin transporter, member 3-A (slc52a3a) of Danio rerio (Zebrafish).